Reading from the N-terminus, the 450-residue chain is Glucose-6-phosphate isomerase (450 aa).

The active-site Proton donor is Glu291. Residues His312 and Lys426 contribute to the active site.

It belongs to the GPI family.

Its subcellular location is the cytoplasm. It carries out the reaction alpha-D-glucose 6-phosphate = beta-D-fructose 6-phosphate. Its pathway is carbohydrate biosynthesis; gluconeogenesis. It functions in the pathway carbohydrate degradation; glycolysis; D-glyceraldehyde 3-phosphate and glycerone phosphate from D-glucose: step 2/4. In terms of biological role, catalyzes the reversible isomerization of glucose-6-phosphate to fructose-6-phosphate. In Clostridium botulinum (strain Hall / ATCC 3502 / NCTC 13319 / Type A), this protein is Glucose-6-phosphate isomerase.